Reading from the N-terminus, the 111-residue chain is Prothymosin alpha (111 aa).

Residue Met-1 is modified to N-acetylmethionine. The disordered stretch occupies residues 1–111 (MSDAAVDTSS…TKKQKTDEDD (111 aa)). Ser-2 is modified (N-acetylserine; in Prothymosin alpha, N-terminally processed). Ser-2 is modified (phosphoserine). Thr-8 bears the Phosphothreonine mark. Ser-9 and Ser-10 each carry phosphoserine. Thr-13 and Thr-14 each carry phosphothreonine. Positions 13–31 (TTKDLKEKKEVVEEAENGR) are enriched in basic and acidic residues. Lys-15 carries the N6-acetyllysine; alternate modification. At Lys-15 the chain carries N6-succinyllysine; alternate. The segment covering 40-84 (ENEENGEQEADNEVDEEEEEGGEEEEEEEEGDGEEEDGDEDEEAE) has biased composition (acidic residues). A compositionally biased stretch (basic and acidic residues) spans 101–111 (DTKKQKTDEDD). A Phosphothreonine modification is found at Thr-102. Lys-103 is subject to N6-acetyllysine; alternate. Residue Lys-103 forms a Glycyl lysine isopeptide (Lys-Gly) (interchain with G-Cter in SUMO2); alternate linkage. Thr-107 carries the post-translational modification Phosphothreonine.

The protein belongs to the pro/parathymosin family. Interacts with NUPR1; regulates apoptotic process. Covalently linked to a small RNA of about 20 nucleotides.

It is found in the nucleus. Functionally, prothymosin alpha may mediate immune function by conferring resistance to certain opportunistic infections. The protein is Prothymosin alpha (PTMA) of Homo sapiens (Human).